A 252-amino-acid polypeptide reads, in one-letter code: Probable transcriptional regulatory protein Tmel_0985 (252 aa).

The protein belongs to the TACO1 family.

The protein resides in the cytoplasm. This Thermosipho melanesiensis (strain DSM 12029 / CIP 104789 / BI429) protein is Probable transcriptional regulatory protein Tmel_0985.